Here is a 68-residue protein sequence, read N- to C-terminus: Small ribosomal subunit protein bS21 (68 aa).

The protein belongs to the bacterial ribosomal protein bS21 family.

The polypeptide is Small ribosomal subunit protein bS21 (Cereibacter sphaeroides (strain ATCC 17029 / ATH 2.4.9) (Rhodobacter sphaeroides)).